A 684-amino-acid polypeptide reads, in one-letter code: DNA ligase (684 aa).

Residues 34 to 38 (DFQYD), 83 to 84 (SL), and Glu117 each bind NAD(+). Lys119 (N6-AMP-lysine intermediate) is an active-site residue. 4 residues coordinate NAD(+): Arg140, Glu186, Lys300, and Lys324. Residues Cys418, Cys421, Cys436, and Cys442 each contribute to the Zn(2+) site. Residues 601 to 684 (PVNLNFDGMK…EMLGEVGSNE (84 aa)) form the BRCT domain.

It belongs to the NAD-dependent DNA ligase family. LigA subfamily. Mg(2+) is required as a cofactor. The cofactor is Mn(2+).

The catalysed reaction is NAD(+) + (deoxyribonucleotide)n-3'-hydroxyl + 5'-phospho-(deoxyribonucleotide)m = (deoxyribonucleotide)n+m + AMP + beta-nicotinamide D-nucleotide.. In terms of biological role, DNA ligase that catalyzes the formation of phosphodiester linkages between 5'-phosphoryl and 3'-hydroxyl groups in double-stranded DNA using NAD as a coenzyme and as the energy source for the reaction. It is essential for DNA replication and repair of damaged DNA. The sequence is that of DNA ligase from Chlorobium phaeobacteroides (strain BS1).